A 375-amino-acid polypeptide reads, in one-letter code: Aminomethyltransferase (375 aa).

The protein belongs to the GcvT family. In terms of assembly, the glycine cleavage system is composed of four proteins: P, T, L and H.

The enzyme catalyses N(6)-[(R)-S(8)-aminomethyldihydrolipoyl]-L-lysyl-[protein] + (6S)-5,6,7,8-tetrahydrofolate = N(6)-[(R)-dihydrolipoyl]-L-lysyl-[protein] + (6R)-5,10-methylene-5,6,7,8-tetrahydrofolate + NH4(+). Its function is as follows. The glycine cleavage system catalyzes the degradation of glycine. In Ralstonia pickettii (strain 12J), this protein is Aminomethyltransferase.